The primary structure comprises 1294 residues: Disease resistance protein L6 (1294 aa).

An N-terminal signal peptide occupies residues M1 to K29. The tract at residues N34–G54 is disordered. In terms of domain architecture, TIR spans V59–I221. NAD(+)-binding positions include R68–R73 and G101. The active site involves E135. Positions D241 to D480 constitute an NB-ARC domain. LRR repeat units lie at residues A246–G268, L468–D492, L604–L625, P626–M650, L904–G928, F1012–E1039, L1063–L1085, K1086–E1109, L1179–S1203, L1205–S1229, and L1254–T1278.

It belongs to the disease resistance TIR-NB-LRR family. As to quaternary structure, homooligomer; homooligomerization is required for activity.

The enzyme catalyses NAD(+) + H2O = ADP-D-ribose + nicotinamide + H(+). The catalysed reaction is NADP(+) + H2O = ADP-D-ribose 2'-phosphate + nicotinamide + H(+). It catalyses the reaction NAD(+) = 2'cADPR + nicotinamide + H(+). In terms of biological role, TIR-NB-LRR receptor-like protein that confers resistance to the flax rust phytopathogenic fungus (M.lini). An NAD(+) hydrolase (NADase): in response to activation, catalyzes cleavage of NAD(+) into ADP-D-ribose (ADPR) and nicotinamide; NAD(+) cleavage triggering a defense system that promotes cell death. Also able to hydrolyze NADP(+), but not other NAD(+)-related molecules. Makes small amounts of 2' cyclic ADPR (2'cADPR). In Linum usitatissimum (Flax), this protein is Disease resistance protein L6.